A 510-amino-acid chain; its full sequence is Pre-glycoprotein polyprotein GP complex (510 aa).

G2 carries the N-myristoyl glycine; by host lipid modification. Over 2 to 17 the chain is Extracellular; sequence GQFITLMQSIPEALNM. Residues 18 to 32 form a helical membrane-spanning segment; sequence AFNVALVIVSLLCVT. K33 is a topological domain (cytoplasmic). Residues 34–53 form a helical membrane-spanning segment; it reads GLINLWKCGIIQLLMFLALA. Extracellular segments follow at residues 54 to 58 and 59 to 448; these read GRSCD and GEYK…ALAD. A Zn(2+)-binding site is contributed by C57. Residues N75, N90, N101, N112, N117, N122, N133, N182, N218, and N243 are each glycosylated (N-linked (GlcNAc...) asparagine; by host). Intrachain disulfides connect C87–C250, C295–C308, C317–C326, and C380–C401. N381, N389, N406, and N411 each carry an N-linked (GlcNAc...) asparagine; by host glycan. The chain crosses the membrane as a helical span at residues 449 to 469; that stretch reads LCFWSLVFFTTTVFFQLIGIP. Over 470-510 the chain is Cytoplasmic; that stretch reads THRHLIGEGCPKPHRLTSNSLCSCGFYKIPKKPFRWVRKGK. H471, H473, C479, H483, C491, and C493 together coordinate Zn(2+).

The protein belongs to the arenaviridae GPC protein family. As to quaternary structure, homotetramer; disulfide-linked. In terms of assembly, homotetramer. GP2 homotetramers bind through ionic interactions with GP1 homotetramers to form the GP complex together with the stable signal peptide. The GP-C polyprotein interacts with the host protease MBTPS1/SKI-1 resulting in the polyprotein processing. Post-translationally, specific enzymatic cleavages in vivo yield mature proteins. GP-C polyprotein is cleaved in the endoplasmic reticulum by the host protease MBTPS1. Only cleaved glycoprotein is incorporated into virions. In terms of processing, the SSP remains stably associated with the GP complex following cleavage by signal peptidase and plays crucial roles in the trafficking of GP through the secretory pathway. Myristoylation is necessary for GP2-mediated fusion activity.

The protein resides in the virion membrane. The protein localises to the host endoplasmic reticulum membrane. Its subcellular location is the host Golgi apparatus membrane. It localises to the host cell membrane. Functionally, class I viral fusion protein that directs fusion of viral and host endosomal membranes, leading to delivery of the nucleocapsid into the cytoplasm. Membrane fusion is mediated by irreversible conformational changes induced upon acidification in the endosome. Its function is as follows. Stable signal peptide (SSP): cleaved and functions as a signal peptide. In addition, it is also retained as the third component of the GP complex. The SSP is required for efficient glycoprotein expression, post-translational maturation cleavage of GP1 and GP2, glycoprotein transport to the cell surface plasma membrane, formation of infectious virus particles, and acid pH-dependent glycoprotein-mediated cell fusion. In terms of biological role, interacts with the host receptor. In Pirital mammarenavirus (isolate Rat/Venezuela/VAV-488/1995) (PIRV), this protein is Pre-glycoprotein polyprotein GP complex.